We begin with the raw amino-acid sequence, 456 residues long: NADPH-ferredoxin reductase FprA (456 aa).

FAD contacts are provided by S14, E40, L48, and V84. Residues R110, 155–158 (NGNV), 199–200 (RR), and E211 each bind NADP(+). Residues W359 and 366-368 (GVI) each bind FAD. NADP(+) is bound at residue G366.

The protein belongs to the ferredoxin--NADP reductase type 1 family. As to quaternary structure, monomer. FAD is required as a cofactor.

It carries out the reaction 2 reduced [2Fe-2S]-[ferredoxin] + NADP(+) + H(+) = 2 oxidized [2Fe-2S]-[ferredoxin] + NADPH. Functionally, may serve as electron transfer protein and supply electrons to P450 systems. In Mycobacterium tuberculosis (strain CDC 1551 / Oshkosh), this protein is NADPH-ferredoxin reductase FprA (fprA).